Reading from the N-terminus, the 113-residue chain is Ig heavy chain V-III region T957 (113 aa).

Positions 1-113 (EVKLEESGGG…YWGQGTLVTV (113 aa)) constitute an Ig-like domain. A disulfide bridge connects residues cysteine 22 and cysteine 98.

This chain is Ig heavy chain V-III region T957, found in Mus musculus (Mouse).